The following is a 148-amino-acid chain: Putative nickel-responsive regulator (148 aa).

Residues H88, H99, H101, and C107 each coordinate Ni(2+).

Belongs to the transcriptional regulatory CopG/NikR family. Requires Ni(2+) as cofactor.

Its function is as follows. Transcriptional regulator. This is Putative nickel-responsive regulator from Helicobacter pylori (strain G27).